Consider the following 124-residue polypeptide: ATP synthase epsilon chain (124 aa).

The tract at residues 97 to 124 (ARVREASSEEEKSRAESELRAVKRSKEK) is disordered.

It belongs to the ATPase epsilon chain family. F-type ATPases have 2 components, CF(1) - the catalytic core - and CF(0) - the membrane proton channel. CF(1) has five subunits: alpha(3), beta(3), gamma(1), delta(1), epsilon(1). CF(0) has three main subunits: a, b and c.

The protein localises to the cell membrane. Functionally, produces ATP from ADP in the presence of a proton gradient across the membrane. This chain is ATP synthase epsilon chain, found in Corynebacterium urealyticum (strain ATCC 43042 / DSM 7109).